The primary structure comprises 354 residues: Rhodopsin (354 aa).

Topologically, residues 1 to 36 (MNGTEGPNFYIPMSNKTGVVRSPFEYPQYYLAEPWQ) are extracellular. N2 and N15 each carry an N-linked (GlcNAc...) asparagine glycan. A helical transmembrane segment spans residues 37 to 61 (YSILCAYMFLLILLGFPINFMTLYV). Residues 62 to 73 (TIQHKKLRTPLN) lie on the Cytoplasmic side of the membrane. A helical transmembrane segment spans residues 74–96 (YILLNLAFANHFMVLCGFTVTMY). At 97 to 110 (SSMNGYFILGATGC) the chain is on the extracellular side. A disulfide bridge links C110 with C187. A helical membrane pass occupies residues 111–133 (YVEGFFATLGGEIALWSLVVLAI). Positions 134–136 (ERY) match the 'Ionic lock' involved in activated form stabilization motif. The Cytoplasmic segment spans residues 134–152 (ERYVVVCKPMSNFRFSENH). The helical transmembrane segment at 153–173 (AVMGVAFTWIMALSCAVPPLL) threads the bilayer. Over 174–202 (GWSRYIPEGMQCSCGVDYYTLKPEVNNES) the chain is Extracellular. Residues 203 to 224 (FVIYMFVVHFTIPLIIIFFCYG) form a helical membrane-spanning segment. Topologically, residues 225 to 252 (RLVCTVKEAAAQQQESATTQKAEKEVTR) are cytoplasmic. The chain crosses the membrane as a helical span at residues 253-274 (MVIIMVVFFLICWVPYASVAFF). Over 275 to 286 (IFSNQGSEFGPI) the chain is Extracellular. Residues 287-308 (FMTVPAFFAKSSSIYNPVIYIM) traverse the membrane as a helical segment. K296 carries the post-translational modification N6-(retinylidene)lysine. Over 309–354 (LNKQFRNCMITTLCCGKNPFGEDDASSAATSKTEASSVSSSQVSPA) the chain is Cytoplasmic. S-palmitoyl cysteine attachment occurs at residues C322 and C323. Positions 331 to 354 (DDASSAATSKTEASSVSSSQVSPA) are disordered. A compositionally biased stretch (low complexity) spans 334–354 (SSAATSKTEASSVSSSQVSPA).

This sequence belongs to the G-protein coupled receptor 1 family. Opsin subfamily. In terms of processing, contains one covalently linked retinal chromophore. Upon light absorption, the covalently bound 11-cis-retinal is converted to all-trans-retinal. After hydrolysis of the Schiff base and release of the covalently bound all-trans-retinal, active rhodopsin is regenerated by binding of a fresh molecule of 11-cis-retinal.

The protein localises to the membrane. The protein resides in the cell projection. It is found in the cilium. It localises to the photoreceptor outer segment. Its function is as follows. Photoreceptor required for image-forming vision at low light intensity. Required for photoreceptor cell viability after birth. Light-induced isomerization of 11-cis to all-trans retinal triggers a conformational change that activates signaling via G-proteins. Subsequent receptor phosphorylation mediates displacement of the bound G-protein alpha subunit by arrestin and terminates signaling. The polypeptide is Rhodopsin (RHO) (Bufo bufo (European toad)).